We begin with the raw amino-acid sequence, 406 residues long: Tyrosine--tRNA ligase (406 aa).

Residue Tyr-35 participates in L-tyrosine binding. Residues 40-49 (PTGPSLHIGH) carry the 'HIGH' region motif. Positions 168 and 172 each coordinate L-tyrosine. Positions 228 to 232 (KMGKS) match the 'KMSKS' region motif. Lys-231 is a binding site for ATP. In terms of domain architecture, S4 RNA-binding spans 339 to 405 (IGIIDLFAEA…GKKRFMRIIF (67 aa)).

The protein belongs to the class-I aminoacyl-tRNA synthetase family. TyrS type 1 subfamily. In terms of assembly, homodimer.

The protein localises to the cytoplasm. The enzyme catalyses tRNA(Tyr) + L-tyrosine + ATP = L-tyrosyl-tRNA(Tyr) + AMP + diphosphate + H(+). Its function is as follows. Catalyzes the attachment of tyrosine to tRNA(Tyr) in a two-step reaction: tyrosine is first activated by ATP to form Tyr-AMP and then transferred to the acceptor end of tRNA(Tyr). This Treponema denticola (strain ATCC 35405 / DSM 14222 / CIP 103919 / JCM 8153 / KCTC 15104) protein is Tyrosine--tRNA ligase.